The following is a 57-amino-acid chain: uncharacterized protein (57 aa).

A helical transmembrane segment spans residues 10–27 (FGLLWLIIGSEAFHLNAL). Residues 28–55 (KQDHLERMKQYDAKIRLAKHEFDDTSNE) are a coiled coil.

It is found in the membrane. This is an uncharacterized protein from Schizosaccharomyces pombe (strain 972 / ATCC 24843) (Fission yeast).